Here is a 175-residue protein sequence, read N- to C-terminus: Alpha-crystallin B chain (175 aa).

Met1 carries the N-acetylmethionine modification. Position 19 is a phosphoserine (Ser19). A glycan (O-linked (GlcNAc) serine) is linked at Ser41. Ser45 and Ser59 each carry phosphoserine. Residues 56–164 form the sHSP domain; sequence RAPSWIDTGL…PERTIPITRE (109 aa). His83 serves as a coordination point for Zn(2+). Lys92 carries the post-translational modification N6-acetyllysine. Zn(2+)-binding residues include His104, Glu106, His111, and His119. A disordered region spans residues 142 to 175; it reads VLTVNGPRKQAPGPERTIPITREEKPAVTAAPKK. Lys166 is subject to N6-acetyllysine. Residue Thr170 is glycosylated (O-linked (GlcNAc) threonine).

It belongs to the small heat shock protein (HSP20) family. In terms of assembly, heteromer composed of three CRYAA and one CRYAB subunits. Aggregates with homologous proteins, including the small heat shock protein HSPB1, to form large heteromeric complexes. Inter-subunit bridging via zinc ions enhances stability, which is crucial as there is no protein turn over in the lens. Interacts with HSPBAP1 and TTN/titin. Interacts with TMEM109; in the cellular response to DNA damage. Interacts with DES; binds rapidly during early stages of DES filament assembly and a reduced binding seen in the later stages. Interacts with TMED10; the interaction mediates the translocation from the cytoplasm into the ERGIC (endoplasmic reticulum-Golgi intermediate compartment) and thereby secretion. Interacts with ATP6V1A and with MTOR, forming a ternary complex. In terms of tissue distribution, lens as well as other tissues.

The protein localises to the cytoplasm. It is found in the nucleus. It localises to the secreted. The protein resides in the lysosome. May contribute to the transparency and refractive index of the lens. Has chaperone-like activity, preventing aggregation of various proteins under a wide range of stress conditions. In lens epithelial cells, stabilizes the ATP6V1A protein, preventing its degradation by the proteasome. The sequence is that of Alpha-crystallin B chain (CRYAB) from Oryctolagus cuniculus (Rabbit).